Here is a 226-residue protein sequence, read N- to C-terminus: MNFSKNLPLLVSLWAITFFAYTHAATFDIVNQCTYTVWAAASPGGGRRLDQGQSWNINVAPGTTQARIWGRTNCNFDANGRGQCETGDCNGLLECQGYGRPPNTLAEFALNQPNNLDFVDISNVDGFNIPLEFSPTTNVCRRLVCNAPIVQQCPSELRTPGGCNNPCTVFNTNEYCCTNGPGSCGPTPLSRFFKERCPDAYSYPQDDPTSLFTCPAGTNYRVVFCP.

Residues M1–A24 form the signal peptide. Intrachain disulfides connect C33–C225, C74–C84, C89–C95, C140–C214, C145–C197, C153–C163, C167–C176, and C177–C184.

Belongs to the thaumatin family. As to expression, expressed in fruits.

The protein resides in the secreted. 3D-structure modeling suggests it may have endo-(1,3)-beta-glucanase activity. The chain is Thaumatin-like protein from Olea europaea (Common olive).